We begin with the raw amino-acid sequence, 778 residues long: DNA topoisomerase 1 (778 aa).

A disordered region spans residues 1 to 141 (MNSSDEEDIA…ETPEEDQGYK (141 aa)). Positions 17 to 26 (KSSSITSAST) are enriched in low complexity. Composition is skewed to basic and acidic residues over residues 71 to 83 (VKTE…EPKS) and 100 to 121 (EKTT…ESKT). Polar residues predominate over residues 122–131 (QSDSQASVKS). 3 interaction with DNA regions span residues 367-368 (KY), 430-435 (RAGGEK), and 522-524 (TAK). Residues 374–778 (NSSVKGQSDF…IESADENWRF (405 aa)) enclose the Topo IB-type catalytic domain. The O-(3'-phospho-DNA)-tyrosine intermediate role is filled by Y736.

Belongs to the type IB topoisomerase family.

The enzyme catalyses ATP-independent breakage of single-stranded DNA, followed by passage and rejoining.. Its function is as follows. Releases the supercoiling and torsional tension of DNA introduced during the DNA replication and transcription by transiently cleaving and rejoining one strand of the DNA duplex. Introduces a single-strand break via transesterification at a target site in duplex DNA. The scissile phosphodiester is attacked by the catalytic tyrosine of the enzyme, resulting in the formation of a DNA-(3'-phosphotyrosyl)-enzyme intermediate and the expulsion of a 5'-OH DNA strand. The free DNA strand then rotates around the intact phosphodiester bond on the opposing strand, thus removing DNA supercoils. Finally, in the religation step, the DNA 5'-OH attacks the covalent intermediate to expel the active-site tyrosine and restore the DNA phosphodiester backbone. The sequence is that of DNA topoisomerase 1 (TOP1) from Candida albicans (Yeast).